The sequence spans 211 residues: MKVPEAAISRLITYLRILEELEAQGVHRTSSEQLGELAQVTAFQVRKDLSYFGSYGTRGVGYTVPVLKRELRHILGLNRKWGLCIVGMGRLGSALADYPGFGESFELRGFFDVDPEKVGRPVRGGVIEHVDLLPQRVPGRIEIALLTVPREAAQKAADLLVAAGIKGILNFAPVVLEVPKEVAVENVDFLAGLTRLSFAILNPKWREEMMG.

A DNA-binding region (H-T-H motif) is located at residues 13–52 (TYLRILEELEAQGVHRTSSEQLGELAQVTAFQVRKDLSYF). 87-92 (GMGRLG) serves as a coordination point for NAD(+).

This sequence belongs to the transcriptional regulatory Rex family. As to quaternary structure, homodimer.

Its subcellular location is the cytoplasm. Its function is as follows. Modulates transcription in response to changes in cellular NADH/NAD(+) redox state. In Thermus aquaticus, this protein is Redox-sensing transcriptional repressor Rex.